A 257-amino-acid chain; its full sequence is Imidazole glycerol phosphate synthase subunit HisF (257 aa).

Active-site residues include D12 and D131.

This sequence belongs to the HisA/HisF family. Heterodimer of HisH and HisF.

It localises to the cytoplasm. It carries out the reaction 5-[(5-phospho-1-deoxy-D-ribulos-1-ylimino)methylamino]-1-(5-phospho-beta-D-ribosyl)imidazole-4-carboxamide + L-glutamine = D-erythro-1-(imidazol-4-yl)glycerol 3-phosphate + 5-amino-1-(5-phospho-beta-D-ribosyl)imidazole-4-carboxamide + L-glutamate + H(+). The protein operates within amino-acid biosynthesis; L-histidine biosynthesis; L-histidine from 5-phospho-alpha-D-ribose 1-diphosphate: step 5/9. Its function is as follows. IGPS catalyzes the conversion of PRFAR and glutamine to IGP, AICAR and glutamate. The HisF subunit catalyzes the cyclization activity that produces IGP and AICAR from PRFAR using the ammonia provided by the HisH subunit. The sequence is that of Imidazole glycerol phosphate synthase subunit HisF from Hydrogenovibrio crunogenus (strain DSM 25203 / XCL-2) (Thiomicrospira crunogena).